A 375-amino-acid chain; its full sequence is Protein RecA (375 aa).

Residues 1–20 (MPAEMKSAASGSDPRSSGER) form a disordered region. Position 79–86 (79–86 (GPESSGKT)) interacts with ATP.

The protein belongs to the RecA family.

Its subcellular location is the cytoplasm. Its function is as follows. Can catalyze the hydrolysis of ATP in the presence of single-stranded DNA, the ATP-dependent uptake of single-stranded DNA by duplex DNA, and the ATP-dependent hybridization of homologous single-stranded DNAs. It interacts with LexA causing its activation and leading to its autocatalytic cleavage. The polypeptide is Protein RecA (Parasynechococcus marenigrum (strain WH8102)).